The following is a 202-amino-acid chain: Solute carrier family 66 member 3 (202 aa).

The signal sequence occupies residues 1-19; it reads MEAALLGLCNWSTLGVCAA. Helical transmembrane passes span 33–53, 64–84, 97–117, and 171–191; these read SARGLSLPSLLLELAGFLVFL, LTYLEYPILIAQDVILLLCIF, IAVLVSSWFILALQKWIIDLA, and FTILLRFVIMLALNIWVTVTV.

It localises to the membrane. The chain is Solute carrier family 66 member 3 from Homo sapiens (Human).